A 546-amino-acid polypeptide reads, in one-letter code: Chaperonin GroEL 1 (546 aa).

ATP is bound by residues 30-33 (TLGP), lysine 51, 87-91 (DGTTT), glycine 415, 479-481 (NAA), and aspartate 495. The interval 526–546 (KEDAPMPGGMPGGMGGMGMDM) is disordered. A compositionally biased stretch (gly residues) spans 534 to 546 (GMPGGMGGMGMDM).

The protein belongs to the chaperonin (HSP60) family. As to quaternary structure, forms a cylinder of 14 subunits composed of two heptameric rings stacked back-to-back. Interacts with the co-chaperonin GroES.

The protein localises to the cytoplasm. It carries out the reaction ATP + H2O + a folded polypeptide = ADP + phosphate + an unfolded polypeptide.. Together with its co-chaperonin GroES, plays an essential role in assisting protein folding. The GroEL-GroES system forms a nano-cage that allows encapsulation of the non-native substrate proteins and provides a physical environment optimized to promote and accelerate protein folding. This chain is Chaperonin GroEL 1, found in Burkholderia ambifaria (strain ATCC BAA-244 / DSM 16087 / CCUG 44356 / LMG 19182 / AMMD) (Burkholderia cepacia (strain AMMD)).